The following is a 354-amino-acid chain: Uroporphyrinogen decarboxylase (354 aa).

Substrate-binding positions include 27-31 (RQAGR), D77, Y154, T209, and H327.

Belongs to the uroporphyrinogen decarboxylase family. As to quaternary structure, homodimer.

Its subcellular location is the cytoplasm. It carries out the reaction uroporphyrinogen III + 4 H(+) = coproporphyrinogen III + 4 CO2. It participates in porphyrin-containing compound metabolism; protoporphyrin-IX biosynthesis; coproporphyrinogen-III from 5-aminolevulinate: step 4/4. Its function is as follows. Catalyzes the decarboxylation of four acetate groups of uroporphyrinogen-III to yield coproporphyrinogen-III. The polypeptide is Uroporphyrinogen decarboxylase (Klebsiella pneumoniae subsp. pneumoniae (strain ATCC 700721 / MGH 78578)).